The primary structure comprises 34 residues: Antimicrobial peptide Alo-2 (34 aa).

3 disulfides stabilise this stretch: Cys-1–Cys-18, Cys-8–Cys-22, and Cys-17–Cys-33.

Its subcellular location is the secreted. In terms of biological role, has antifungal activity against C.glabrata. This Acrocinus longimanus (Giant harlequin beetle) protein is Antimicrobial peptide Alo-2.